Reading from the N-terminus, the 497-residue chain is Probable cytosol aminopeptidase (497 aa).

Residues Lys-267 and Asp-272 each contribute to the Mn(2+) site. Lys-279 is an active-site residue. Residues Asp-290, Asp-349, and Glu-351 each coordinate Mn(2+). Arg-353 is an active-site residue.

This sequence belongs to the peptidase M17 family. Mn(2+) is required as a cofactor.

It localises to the cytoplasm. It catalyses the reaction Release of an N-terminal amino acid, Xaa-|-Yaa-, in which Xaa is preferably Leu, but may be other amino acids including Pro although not Arg or Lys, and Yaa may be Pro. Amino acid amides and methyl esters are also readily hydrolyzed, but rates on arylamides are exceedingly low.. The enzyme catalyses Release of an N-terminal amino acid, preferentially leucine, but not glutamic or aspartic acids.. Functionally, presumably involved in the processing and regular turnover of intracellular proteins. Catalyzes the removal of unsubstituted N-terminal amino acids from various peptides. The polypeptide is Probable cytosol aminopeptidase (Pseudomonas putida (strain W619)).